An 88-amino-acid chain; its full sequence is Apolipoprotein C-I (88 aa).

The N-terminal stretch at Met1–Ala26 is a signal peptide.

This sequence belongs to the apolipoprotein C1 family.

It localises to the secreted. Inhibitor of lipoprotein binding to the low density lipoprotein (LDL) receptor, LDL receptor-related protein, and very low density lipoprotein (VLDL) receptor. Associates with high density lipoproteins (HDL) and the triacylglycerol-rich lipoproteins in the plasma and makes up about 10% of the protein of the VLDL and 2% of that of HDL. Appears to interfere directly with fatty acid uptake and is also the major plasma inhibitor of cholesteryl ester transfer protein (CETP). Binds free fatty acids and reduces their intracellular esterification. Modulates the interaction of APOE with beta-migrating VLDL and inhibits binding of beta-VLDL to the LDL receptor-related protein. This is Apolipoprotein C-I (APOC1) from Ursus maritimus (Polar bear).